Reading from the N-terminus, the 213-residue chain is Glutathione S-transferase APIC (213 aa).

A GST N-terminal domain is found at 1 to 82 (MAIKVHGSPM…YIAHVYADNG (82 aa)). Glutathione contacts are provided by residues S11, 12-13 (TA), 40-41 (HK), 53-54 (QV), and 66-67 (ES). The region spanning 89–213 (DPKKMPIMSV…WVKGLEKLQK (125 aa)) is the GST C-terminal domain.

This sequence belongs to the GST superfamily. Phi family.

The catalysed reaction is RX + glutathione = an S-substituted glutathione + a halide anion + H(+). Conjugation of reduced glutathione to a wide number of exogenous and endogenous hydrophobic electrophiles. The polypeptide is Glutathione S-transferase APIC (Nicotiana tabacum (Common tobacco)).